Reading from the N-terminus, the 205-residue chain is Glycerol-3-phosphate acyltransferase (205 aa).

Over 1–3 (MSA) the chain is Periplasmic. A helical membrane pass occupies residues 4 to 24 (IAPGMILFAYLCGSISSAILV). The Cytoplasmic segment spans residues 25–52 (CRIAGLPDPRESGSGNPGATNVLRIGGK). Residues 53-73 (GAAVAVLIFDILKGMLPVWGA) form a helical membrane-spanning segment. The Periplasmic segment spans residues 74-80 (YALGVTP). The chain crosses the membrane as a helical span at residues 81–101 (FWLGLIAIAACLGHIWPVFFG). The Cytoplasmic segment spans residues 102–111 (FKGGKGVATA). Residues 112–132 (FGAIAPIGWDLTGVMAGTWLL) form a helical membrane-spanning segment. Topologically, residues 133–137 (TVLLS) are periplasmic. The helical transmembrane segment at 138–158 (GYSSLGAIVSALIAPFYVWWF) threads the bilayer. The Cytoplasmic segment spans residues 159 to 205 (KPQFTFPVSMLSCLILLRHHDNIQRLWRRQETKIWTKLKKKRQKDSE).

Belongs to the PlsY family. In terms of assembly, probably interacts with PlsX.

It localises to the cell inner membrane. It catalyses the reaction sn-glycerol 3-phosphate + an acyl-CoA = a 1-acyl-sn-glycero-3-phosphate + CoA. The enzyme catalyses a fatty acyl-[ACP] + sn-glycerol 3-phosphate = a 1-acyl-sn-glycero-3-phosphate + holo-[ACP]. Its pathway is lipid metabolism; phospholipid metabolism. Catalyzes the transfer of an acyl group from acyl-ACP to glycerol-3-phosphate (G3P) to form lysophosphatidic acid (LPA). This enzyme can also utilize acyl-CoA as fatty acyl donor, but not acyl-PO(4). This Salmonella schwarzengrund (strain CVM19633) protein is Glycerol-3-phosphate acyltransferase.